A 325-amino-acid chain; its full sequence is Elongation factor P--(R)-beta-lysine ligase (325 aa).

76 to 78 contributes to the substrate binding site; that stretch reads SPE. ATP is bound by residues 100–102 and Asn109; that span reads RNE. Tyr118 is a substrate binding site. 244-245 provides a ligand contact to ATP; it reads EL. A substrate-binding site is contributed by Glu251. ATP is bound at residue Gly300.

This sequence belongs to the class-II aminoacyl-tRNA synthetase family. EpmA subfamily. Homodimer.

It carries out the reaction D-beta-lysine + L-lysyl-[protein] + ATP = N(6)-((3R)-3,6-diaminohexanoyl)-L-lysyl-[protein] + AMP + diphosphate + H(+). In terms of biological role, with EpmB is involved in the beta-lysylation step of the post-translational modification of translation elongation factor P (EF-P) on 'Lys-34'. Catalyzes the ATP-dependent activation of (R)-beta-lysine produced by EpmB, forming a lysyl-adenylate, from which the beta-lysyl moiety is then transferred to the epsilon-amino group of EF-P 'Lys-34'. This chain is Elongation factor P--(R)-beta-lysine ligase, found in Salmonella gallinarum (strain 287/91 / NCTC 13346).